Reading from the N-terminus, the 496-residue chain is Neuronal acetylcholine receptor subunit beta-4 (496 aa).

Positions 1 to 19 (MRSALPLVLFSLVALCGRG) are cleaved as a signal peptide. Residues 20–236 (DCRVANAEEK…IIKRKPLFYT (217 aa)) lie on the Extracellular side of the membrane. Asn36, Asn93, Asn138, and Asn166 each carry an N-linked (GlcNAc...) asparagine glycan. An intrachain disulfide couples Cys153 to Cys167. A helical membrane pass occupies residues 237–257 (INLIIPCVLITSLAILVFYLP). Over 258 to 265 (SDCGEKMT) the chain is Cytoplasmic. Position 262 (Glu262) interacts with Na(+). Residues 266–286 (LCISVLLALTVFLLLISKIVP) traverse the membrane as a helical segment. Residues 287–298 (PTSLNVPLIGKY) lie on the Extracellular side of the membrane. Residues 299–319 (LMFTMVLVTFSIVTSVCVLNV) form a helical membrane-spanning segment. At 320–464 (HHRSPSTHTM…WKYVAMVVDR (145 aa)) the chain is on the cytoplasmic side. Residues 465–485 (LFLWVFVVVCVLGTVGLFLPP) form a helical membrane-spanning segment. Residues 486-496 (LFQTHTPSEEP) lie on the Extracellular side of the membrane.

Belongs to the ligand-gated ion channel (TC 1.A.9) family. Acetylcholine receptor (TC 1.A.9.1) subfamily. Beta-4/CHRNB4 sub-subfamily. In terms of assembly, neuronal AChR is composed of two different types of subunits: alpha and beta. CHRNB4/Beta-4 subunit can be combined to CHRNA2/alpha-2, CHRNA3/alpha-3 or CHRNA4/alpha-4, CHRNA5/alpha-5 and CHRNB3/beta-3 to give rise to functional receptors. Forms stoichiometries such as (CHRNA3)2:(CHRNB4)3 or (CHRNA3:CHRNB4)2:CHRNB3. Interacts with RIC3; which is required for proper folding and assembly. Interacts with LYPD6.

Its subcellular location is the synaptic cell membrane. It localises to the cell membrane. It carries out the reaction Ca(2+)(in) = Ca(2+)(out). The enzyme catalyses K(+)(in) = K(+)(out). It catalyses the reaction Na(+)(in) = Na(+)(out). Its function is as follows. Component of neuronal acetylcholine receptors (nAChRs) that function as pentameric, ligand-gated cation channels with high calcium permeability among other activities. nAChRs are excitatory neurotrasnmitter receptors formed by a collection of nAChR subunits known to mediate synaptic transmission in the nervous system and the neuromuscular junction. Each nAchR subunit confers differential attributes to channel properties, including activation, deactivation and desensitization kinetics, pH sensitivity, cation permeability, and binding to allosteric modulators. CHRNB4 forms heteropentameric neuronal acetylcholine receptors with CHRNA2, CHRNA3 and CHRNA4, as well as CHRNA5 and CHRNB3 as accesory subunits. CHRNA3:CHRNB4 being predominant in neurons of the autonomic ganglia, it is known as ganglionic nicotinic receptor. CHRNA3:CHRNB4 or CHRNA3:CHRNA5:CHRNB4 play also an important role in the habenulo-interpeduncular tract, modulating the mesolimbic dopamine system and affecting reward circuits and addiction. Hypothalamic CHRNA3:CHRNB4 nAChR activation by nicotine leads to activation of POMC neurons and a decrease in food intake. The protein is Neuronal acetylcholine receptor subunit beta-4 (CHRNB4) of Bos taurus (Bovine).